We begin with the raw amino-acid sequence, 117 residues long: NADH dehydrogenase [ubiquinone] 1 beta subcomplex subunit 9 (117 aa).

An N-acetylserine modification is found at Ser-2.

This sequence belongs to the complex I LYR family. Complex I is composed of at least 49 different subunits. In terms of tissue distribution, expressed in roots, stems, flowers, rosette leaves, cauline leaves and siliques, with the highest expression in the stems.

The protein resides in the mitochondrion inner membrane. Its function is as follows. Accessory subunit of the mitochondrial membrane respiratory chain NADH dehydrogenase (Complex I), that is believed to be not involved in catalysis. Complex I functions in the transfer of electrons from NADH to the respiratory chain. The immediate electron acceptor for the enzyme is believed to be ubiquinone. Is required for correct plant growth and development. In Arabidopsis thaliana (Mouse-ear cress), this protein is NADH dehydrogenase [ubiquinone] 1 beta subcomplex subunit 9 (CIB22).